Consider the following 483-residue polypeptide: FAD-linked oxidoreductase easE (483 aa).

The region spanning Gln-10–Asp-193 is the FAD-binding PCMH-type domain.

Belongs to the oxygen-dependent FAD-linked oxidoreductase family. FAD is required as a cofactor.

It participates in alkaloid biosynthesis; ergot alkaloid biosynthesis. Functionally, FAD-linked oxidoreductase; part of the gene cluster that mediates the biosynthesis of fungal ergot alkaloid. DmaW catalyzes the first step of ergot alkaloid biosynthesis by condensing dimethylallyl diphosphate (DMAP) and tryptophan to form 4-dimethylallyl-L-tryptophan. The second step is catalyzed by the methyltransferase easF that methylates 4-dimethylallyl-L-tryptophan in the presence of S-adenosyl-L-methionine, resulting in the formation of 4-dimethylallyl-L-abrine. The catalase easC and the FAD-dependent oxidoreductase easE then transform 4-dimethylallyl-L-abrine to chanoclavine-I which is further oxidized by easD in the presence of NAD(+), resulting in the formation of chanoclavine-I aldehyde. Agroclavine dehydrogenase easG then mediates the conversion of chanoclavine-I aldehyde to agroclavine via a non-enzymatic adduct reaction: the substrate is an iminium intermediate that is formed spontaneously from chanoclavine-I aldehyde in the presence of glutathione. The presence of easA is not required to complete this reaction. Further conversion of agroclavine to paspalic acid is a two-step process involving oxidation of agroclavine to elymoclavine and of elymoclavine to paspalic acid, the second step being performed by the elymoclavine oxidase cloA. Paspalic acid is then further converted to D-lysergic acid. Ergopeptines are assembled from D-lysergic acid and three different amino acids by the D-lysergyl-peptide-synthetases composed each of a monomudular and a trimodular nonribosomal peptide synthetase subunit. LpsB and lpsC encode the monomodular subunits responsible for D-lysergic acid activation and incorporation into the ergopeptine backbone. LpsA1 and A2 subunits encode the trimodular nonribosomal peptide synthetase assembling the tripeptide portion of ergopeptines. LpsA1 is responsible for formation of the major ergopeptine, ergotamine, and lpsA2 for alpha-ergocryptine, the minor ergopeptine of the total alkaloid mixture elaborated by C.purpurea. D-lysergyl-tripeptides are assembled by the nonribosomal peptide synthetases and released as N-(D-lysergyl-aminoacyl)-lactams. Cyclolization of the D-lysergyl-tripeptides is performed by the Fe(2+)/2-ketoglutarate-dependent dioxygenase easH which introduces a hydroxyl group into N-(D-lysergyl-aminoacyl)-lactam at alpha-C of the aminoacyl residue followed by spontaneous condensation with the terminal lactam carbonyl group. This chain is FAD-linked oxidoreductase easE, found in Claviceps purpurea (Ergot fungus).